The primary structure comprises 186 residues: Ribosome-recycling factor (186 aa).

The protein belongs to the RRF family.

It localises to the cytoplasm. Responsible for the release of ribosomes from messenger RNA at the termination of protein biosynthesis. May increase the efficiency of translation by recycling ribosomes from one round of translation to another. The sequence is that of Ribosome-recycling factor from Rickettsia rickettsii (strain Iowa).